The primary structure comprises 642 residues: Bifunctional protein glk (642 aa).

Residues 1-340 (MSTGAQSKAA…QLSNRSGGAS (340 aa)) are glucokinase. 23–28 (ADVGGT) is an ATP binding site. The 77-residue stretch at 341 to 417 (SAVFERIRQM…LKLATGLTGT (77 aa)) folds into the HTH rpiR-type domain. Residues 341-642 (SAVFERIRQM…SPAAKDVARD (302 aa)) form a putative HTH-type transcriptional regulator region. The segment at residues 377–396 (IVDIARKADVSQPTVIRFCR) is a DNA-binding region (H-T-H motif). Residues 461 to 600 (AIEILNGARR…AVGVAIRRAS (140 aa)) form the SIS domain. The helical transmembrane segment at 576-596 (SMISRILHLLMIDILAVGVAI) threads the bilayer.

The protein in the N-terminal section; belongs to the bacterial glucokinase family.

It is found in the membrane. It catalyses the reaction D-glucose + ATP = D-glucose 6-phosphate + ADP + H(+). The protein is Bifunctional protein glk (glk) of Burkholderia lata (strain ATCC 17760 / DSM 23089 / LMG 22485 / NCIMB 9086 / R18194 / 383).